Here is a 314-residue protein sequence, read N- to C-terminus: Atrochrysone carboxyl ACP thioesterase AgnL7 (314 aa).

4 residues coordinate Zn(2+): His103, His105, Asp107, and His108. The active-site Proton donor/acceptor is Asp107.

The protein belongs to the metallo-beta-lactamase superfamily. Zn(2+) is required as a cofactor.

It carries out the reaction atrochrysone carboxyl-[ACP] + H2O = atrochrysone carboxylate + holo-[ACP] + H(+). It functions in the pathway secondary metabolite biosynthesis. Functionally, atrochrysone carboxyl ACP thioesterase; part of the gene cluster that mediates the biosynthesis of agnestins, dihydroxy-xanthone metabolites. The pathway begins with the assembly and cyclization of atrochrysone thioester by the non-reducing polyketide synthase Agnpks1. The atrochrysone carboxyl ACP thioesterase AgnL7 then breaks the thioester bond and releases the atrochrysone carboxylic acid as the first enzyme-free intermediate. The decarboxylase AgnL1 then catalyzes the concerted decarboxylation-elimination required to convert atochrysone carboxylic acid into emodin anthrone, which is further oxidized to emodin by the anthrone oxygenase AgnL2. Emodin then undergoes reduction catalyzed by the oxidoreductase AgnL4 to yield the dihydroquinone tautomer which is the substrate for reduction by the short chain dehydrogenase AgnL6 reduction to produce hydroxyketone, followed by AgnL8 dehydration and likely spontaneous autoxidation to chrysophanol. Baeyer-Villiger oxidation by the oxidase AgnL3 leads to monodictyphenone via cleavage of the C-10/C-10a bond of chrysophanol. Alternative cleavage at the C-4a/C-10 bond of chrysophanol also leads to the formation some cephalone F. Further conversion to agnestins A and B, requires reduction to dihydro-monodictyphenone, oxidation to agnestin C probably via an epoxide, and rearrangement to either agnestin A or agnestin B directly, although agnestin A or agnestin B can also interconvert. Within the cluster, AgnR1 is the only unassigned oxidoreductase present which could be involved in this conversion. However, AgnR1 seems not to be involved in this step, and thus genes involved in the proposed oxidation/reduction may be located elsewhere on the genome. Further agnestin A derivatives are probably formed by spontaneous decarboxylations, dehydrations and methanolysis reactions. The polypeptide is Atrochrysone carboxyl ACP thioesterase AgnL7 (Paecilomyces divaricatus (Penicillium divaricatum)).